A 365-amino-acid polypeptide reads, in one-letter code: MTLQFVDPENYETLLAAKKEHLNKQFAIFNPPALECFASPKLHYRMRAELRVWHDGDELYYIMFDKKTKQKFRVEQFPPASELINNLMPVLLELVKSSEILRYKLFQIDFLSNLKGQVIVSLLYHKQLDDNWLVEAKRIKAELLKQFDINFIGRARKQKILLDYDYVIEELQVDGNKLFYQQIENSFTQPNAKVCEKMLEWAIDCTRDSQGDLLELYCGNGNFSLALAKNFNKVLATEIAKPSVESAQFNMAQNGINNVTVIRMSAEEFTQAINGEREFYRLKEITLSDYQCNTILVDPPRSGLDDETVKMVQHYDNILYISCNADTLSRNLEVLSKTHEIKRFALFDQFPYTYHSEAGVYLVKR.

S-adenosyl-L-methionine contacts are provided by Gln-189, Tyr-217, Asn-222, Glu-238, and Asp-298. Cys-323 serves as the catalytic Nucleophile. Glu-357 functions as the Proton acceptor in the catalytic mechanism.

It belongs to the class I-like SAM-binding methyltransferase superfamily. RNA M5U methyltransferase family. TrmA subfamily.

It carries out the reaction uridine(54) in tRNA + S-adenosyl-L-methionine = 5-methyluridine(54) in tRNA + S-adenosyl-L-homocysteine + H(+). The catalysed reaction is uridine(341) in tmRNA + S-adenosyl-L-methionine = 5-methyluridine(341) in tmRNA + S-adenosyl-L-homocysteine + H(+). Functionally, dual-specificity methyltransferase that catalyzes the formation of 5-methyluridine at position 54 (m5U54) in all tRNAs, and that of position 341 (m5U341) in tmRNA (transfer-mRNA). This Psychromonas ingrahamii (strain DSM 17664 / CCUG 51855 / 37) protein is tRNA/tmRNA (uracil-C(5))-methyltransferase.